Here is a 156-residue protein sequence, read N- to C-terminus: Small ribosomal subunit protein uS7 (156 aa).

It belongs to the universal ribosomal protein uS7 family. Part of the 30S ribosomal subunit. Contacts proteins S9 and S11.

Its function is as follows. One of the primary rRNA binding proteins, it binds directly to 16S rRNA where it nucleates assembly of the head domain of the 30S subunit. Is located at the subunit interface close to the decoding center, probably blocks exit of the E-site tRNA. This Arthrospira platensis (Spirulina platensis) protein is Small ribosomal subunit protein uS7.